We begin with the raw amino-acid sequence, 42 residues long: Photosystem I reaction center subunit IX (42 aa).

The chain crosses the membrane as a helical span at residues 7-27 (YLSTAPVIATIWFGFLAGLLI).

The protein belongs to the PsaJ family.

It is found in the plastid. Its subcellular location is the chloroplast thylakoid membrane. Its function is as follows. May help in the organization of the PsaE and PsaF subunits. This Chaetosphaeridium globosum (Charophycean green alga) protein is Photosystem I reaction center subunit IX.